The sequence spans 354 residues: Mating-type protein MAT-1 (354 aa).

A DNA-binding region (alpha box) is located at residues 60-117 (KAKKALNAFVGFRCYYIAIPAFKQWPMKKLSNLISLLWDRDPNKSLWSLMAKAWSNIR).

The protein belongs to the MATALPHA1 family.

The protein resides in the nucleus. In terms of biological role, mating type proteins are sequence specific DNA-binding proteins that act as master switches in fungal differentiation by controlling gene expression in a cell type-specific fashion. Transcriptional activator that induces the transcription of alpha-specific genes. This Cochliobolus cymbopogonis (Curvularia cymbopogonis) protein is Mating-type protein MAT-1 (MAT1).